We begin with the raw amino-acid sequence, 173 residues long: RNA polymerase sigma factor TcsR (173 aa).

Positions Ile-122 to Lys-169 are sigma-70 factor domain-4. Positions Glu-143–Leu-162 form a DNA-binding region, H-T-H motif.

It belongs to the sigma-70 factor family.

Sigma factors are initiation factors that promote the attachment of RNA polymerase to specific initiation sites and are then released. Transcriptional regulator specifically required to activate expression of the toxin gene locus, composed of tcsL, tcsH and tcdE/utxA. This is RNA polymerase sigma factor TcsR from Paraclostridium sordellii (Clostridium sordellii).